An 892-amino-acid polypeptide reads, in one-letter code: Formin-like protein 8 (892 aa).

Positions 1 to 23 are cleaved as a signal peptide; that stretch reads MPPAIARFVAIAAVLLCGHVAVA. Positions 43–119 are disordered; that stretch reads FPIEWTPPPS…SGSGSGHHGG (77 aa). Positions 47–59 are enriched in pro residues; the sequence is WTPPPSPPPPPAP. Over residues 87–111 the composition is skewed to low complexity; the sequence is TTPTSPGTTPSPTTVAADVSKTPSG. The helical transmembrane segment at 126–146 threads the bilayer; that stretch reads IVAAGAGAAAAVALLGFACAF. Residues 188–457 form a disordered region; the sequence is PTTPARHHGP…GSGEPRPKLK (270 aa). Residues 210–230 show a composition bias toward basic and acidic residues; sequence LRSERARRGVSRDEDADHPSP. Composition is skewed to low complexity over residues 268 to 286, 297 to 306, and 321 to 330; these read AEAWSSASASSPPTTTTAS, FFPPVAAIAA, and RTRFSTGSTP. The segment covering 339–383 has biased composition (pro residues); that stretch reads SPRPVQPSNAPPPPPPPPPPPPPPPPPKLNTAPKPPPPPPPPPSV. Over residues 424-436 the composition is skewed to polar residues; that stretch reads AATTVDNNGSTSM. In terms of domain architecture, FH2 spans 446 to 867; the sequence is DGGSGEPRPK…GSARSFRISA (422 aa).

The protein belongs to the formin-like family. Class-I subfamily.

It localises to the membrane. The polypeptide is Formin-like protein 8 (FH8) (Oryza sativa subsp. japonica (Rice)).